We begin with the raw amino-acid sequence, 262 residues long: Hydroxyethylthiazole kinase (262 aa).

Methionine 50 contacts substrate. Arginine 125 and threonine 171 together coordinate ATP. Glycine 198 contributes to the substrate binding site.

The protein belongs to the Thz kinase family. Mg(2+) serves as cofactor.

The enzyme catalyses 5-(2-hydroxyethyl)-4-methylthiazole + ATP = 4-methyl-5-(2-phosphooxyethyl)-thiazole + ADP + H(+). Its pathway is cofactor biosynthesis; thiamine diphosphate biosynthesis; 4-methyl-5-(2-phosphoethyl)-thiazole from 5-(2-hydroxyethyl)-4-methylthiazole: step 1/1. In terms of biological role, catalyzes the phosphorylation of the hydroxyl group of 4-methyl-5-beta-hydroxyethylthiazole (THZ). This Shigella sonnei (strain Ss046) protein is Hydroxyethylthiazole kinase.